The chain runs to 1585 residues: Adhesion G protein-coupled receptor B2 (1585 aa).

The N-terminal stretch at 1–32 (MENTGWMGKGHRMTPACPLLLSVILSLRLATA) is a signal peptide. At 33 to 936 (FDPAPSACSA…ELAGSPSVPL (904 aa)) the chain is on the extracellular side. Asn-106, Asn-191, and Asn-192 each carry an N-linked (GlcNAc...) asparagine glycan. A compositionally biased stretch (low complexity) spans 229-238 (AGAGSTTTTS). The tract at residues 229–271 (AGAGSTTTTSPGPPAAHTLSNALVPGGPAPPAEADLHSGSSND) is disordered. An O-linked (Xyl...) (chondroitin sulfate) serine glycan is attached at Ser-266. 4 TSP type-1 domains span residues 309–362 (DPAA…ATCP), 364–417 (HGVW…AACP), 419–472 (EGQW…LECP), and 475–528 (DSKW…KRCP). Intrachain disulfides connect Cys-321-Cys-355, Cys-325-Cys-361, Cys-336-Cys-345, Cys-376-Cys-411, Cys-380-Cys-416, Cys-391-Cys-401, Cys-431-Cys-466, Cys-435-Cys-471, Cys-446-Cys-456, Cys-487-Cys-522, Cys-491-Cys-527, Cys-502-Cys-512, Cys-534-Cys-569, and Cys-557-Cys-587. Asn-356 is a glycosylation site (N-linked (GlcNAc...) asparagine). Residue Asn-437 is glycosylated (N-linked (GlcNAc...) asparagine). Residues Asn-560 and Asn-645 are each glycosylated (N-linked (GlcNAc...) asparagine). The GAIN-B domain occupies 757-924 (DRLFLPKEVL…AVLAQPPKDL (168 aa)). The interval 767–806 (SLSSPGKPATSGAAGSPGRGRGPGTVPPGPGHSHQRLLPA) is disordered. Over residues 769–780 (SSPGKPATSGAA) the composition is skewed to low complexity. The N-linked (GlcNAc...) asparagine glycan is linked to Asn-867. 2 disulfide bridges follow: Cys-874–Cys-906 and Cys-894–Cys-908. The GPS stretch occupies residues 874–924 (CASWDYSRADASSGDWDTENCQTLETQAAHTRCQCQHLSTFAVLAQPPKDL). The chain crosses the membrane as a helical span at residues 937 to 957 (VIGCAVSCMALLTLLAIYAAF). At 958-965 (WRFIKSER) the chain is on the cytoplasmic side. A helical transmembrane segment spans residues 966-986 (SIILLNFCLSILASNILILVG). The Extracellular segment spans residues 987–994 (QSRVLSKG). The chain crosses the membrane as a helical span at residues 995-1015 (VCTMTAAFLHFFFLSSFCWVL). The Cytoplasmic portion of the chain corresponds to 1016–1036 (TEAWQSYLAVIGRMRTRLVRK). Residues 1037–1057 (RFLCLGWGLPALVVAVSVGFT) traverse the membrane as a helical segment. At 1058–1078 (RTKGYGTSSYCWLSLEGGLLY) the chain is on the extracellular side. A helical membrane pass occupies residues 1079–1099 (AFVGPAAVIVLVNMLIGIIVF). Over 1100-1121 (NKLMARDGISDKSKKQRAGSER) the chain is Cytoplasmic. Residues 1122–1142 (CPWASLLLPCSACGAVPSPLL) form a helical membrane-spanning segment. At 1143–1153 (SSASARNAMAS) the chain is on the extracellular side. The chain crosses the membrane as a helical span at residues 1154–1174 (LWSSCVVLPLLALTWMSAVLA). At 1175–1585 (MTDRRSVLFQ…PPDGDFQTEV (411 aa)) the chain is on the cytoplasmic side. Tyr-1351 carries the phosphotyrosine modification. Disordered stretches follow at residues 1359–1385 (LSLQ…PRRA), 1423–1454 (FQPP…GSTM), and 1498–1585 (YRSQ…QTEV). Basic and acidic residues predominate over residues 1372 to 1382 (DAPRARPEGTP). The segment covering 1543–1552 (SWSTFKSMTL) has biased composition (polar residues). The span at 1575-1585 (EPPDGDFQTEV) shows a compositional bias: acidic residues.

This sequence belongs to the G-protein coupled receptor 2 family. Adhesion G-protein coupled receptor (ADGR) subfamily. As to quaternary structure, heterodimer of 2 chains generated by proteolytic processing; the large extracellular N-terminal fragment and the membrane-bound C-terminal fragment predominantly remain associated and non-covalently linked. Interacts with GABPB2. Interacts (via carboxy-terminus) with TAX1BP3. Interacts with GNAZ. Interacts with SH3GL2. Post-translationally, glycosylated. In terms of processing, autoproteolytically processed at the GPS region of the GAIN-B domain; this cleavage modulates receptor activity. Additionally, furin is involved in the cleavage at another site, in the middle of the extracellular domain, generating a soluble fragment. As to expression, detected in cerebrospinal fluid (at protein level). Strongly expressed in brain. Also detected in heart, thymus, skeletal muscle, and different cell lines.

The protein localises to the cell membrane. It is found in the secreted. Receptor activity is regulated by proteolytic processing. The long N-terminal has a an inhibitory effect on the constitutive signaling activity. Removal of the N-terminal region induces an increase of the receptor activity. Orphan G-protein coupled receptor involved in cell adhesion and probably in cell-cell interactions. Activates NFAT-signaling pathway, a transcription factor, via the G-protein GNAZ. Involved in angiogenesis inhibition. The polypeptide is Adhesion G protein-coupled receptor B2 (Homo sapiens (Human)).